Reading from the N-terminus, the 138-residue chain is Small ribosomal subunit protein uS11c (138 aa).

The interval 1-23 (MAKAIPRRSSRRNGRIGSRKSAR) is disordered.

It belongs to the universal ribosomal protein uS11 family. As to quaternary structure, part of the 30S ribosomal subunit.

The protein localises to the plastid. It localises to the chloroplast. This chain is Small ribosomal subunit protein uS11c, found in Ipomoea purpurea (Common morning glory).